A 447-amino-acid chain; its full sequence is Phosphoglucosamine mutase (447 aa).

Ser100 (phosphoserine intermediate) is an active-site residue. Residues Ser100, Asp240, Asp242, and Asp244 each coordinate Mg(2+). A Phosphoserine modification is found at Ser100.

This sequence belongs to the phosphohexose mutase family. It depends on Mg(2+) as a cofactor. Post-translationally, activated by phosphorylation.

The enzyme catalyses alpha-D-glucosamine 1-phosphate = D-glucosamine 6-phosphate. Catalyzes the conversion of glucosamine-6-phosphate to glucosamine-1-phosphate. The protein is Phosphoglucosamine mutase of Clostridium botulinum (strain Eklund 17B / Type B).